Consider the following 304-residue polypeptide: uncharacterized protein (304 aa).

Belongs to the histone deacetylase family.

Putative deacetylase. This is an uncharacterized protein from Synechocystis sp. (strain ATCC 27184 / PCC 6803 / Kazusa).